We begin with the raw amino-acid sequence, 325 residues long: tRNA dimethylallyltransferase (325 aa).

Residue 17–24 (GPTASGKT) participates in ATP binding. 19-24 (TASGKT) is a substrate binding site. Interaction with substrate tRNA stretches follow at residues 42–45 (DSAL), 166–170 (QRIQR), 251–256 (RCVGYR), and 284–291 (KRQITWLR).

Belongs to the IPP transferase family. Monomer. The cofactor is Mg(2+).

It catalyses the reaction adenosine(37) in tRNA + dimethylallyl diphosphate = N(6)-dimethylallyladenosine(37) in tRNA + diphosphate. Its function is as follows. Catalyzes the transfer of a dimethylallyl group onto the adenine at position 37 in tRNAs that read codons beginning with uridine, leading to the formation of N6-(dimethylallyl)adenosine (i(6)A). The chain is tRNA dimethylallyltransferase from Burkholderia multivorans (strain ATCC 17616 / 249).